A 456-amino-acid chain; its full sequence is uncharacterized protein (456 aa).

The 164-residue stretch at 277–440 (IKNTKTIKQL…TKQLVRTTAK (164 aa)) folds into the YrdC-like domain.

This is an uncharacterized protein from Mycoplasma genitalium (strain ATCC 33530 / DSM 19775 / NCTC 10195 / G37) (Mycoplasmoides genitalium).